The following is a 720-amino-acid chain: Glycine--tRNA ligase beta subunit (720 aa).

The protein belongs to the class-II aminoacyl-tRNA synthetase family. In terms of assembly, tetramer of two alpha and two beta subunits.

Its subcellular location is the cytoplasm. It catalyses the reaction tRNA(Gly) + glycine + ATP = glycyl-tRNA(Gly) + AMP + diphosphate. This chain is Glycine--tRNA ligase beta subunit, found in Acidovorax sp. (strain JS42).